The sequence spans 242 residues: ATP synthase subunit a (242 aa).

A run of 6 helical transmembrane segments spans residues 29 to 49 (SSIY…LAFY), 84 to 104 (FIPL…LGMT), 114 to 134 (IIVT…VGFI), 140 to 160 (FLTL…MIVI), 189 to 209 (VIAS…IPLM), and 210 to 230 (VILI…FTIL).

The protein belongs to the ATPase A chain family. As to quaternary structure, F-type ATPases have 2 components, CF(1) - the catalytic core - and CF(0) - the membrane proton channel. CF(1) has five subunits: alpha(3), beta(3), gamma(1), delta(1), epsilon(1). CF(0) has three main subunits: a(1), b(2) and c(9-12). The alpha and beta chains form an alternating ring which encloses part of the gamma chain. CF(1) is attached to CF(0) by a central stalk formed by the gamma and epsilon chains, while a peripheral stalk is formed by the delta and b chains.

The protein resides in the cell inner membrane. Functionally, key component of the proton channel; it plays a direct role in the translocation of protons across the membrane. The chain is ATP synthase subunit a from Rickettsia prowazekii (strain Madrid E).